A 215-amino-acid polypeptide reads, in one-letter code: ATP phosphoribosyltransferase (215 aa).

It belongs to the ATP phosphoribosyltransferase family. Short subfamily. In terms of assembly, heteromultimer composed of HisG and HisZ subunits.

Its subcellular location is the cytoplasm. The enzyme catalyses 1-(5-phospho-beta-D-ribosyl)-ATP + diphosphate = 5-phospho-alpha-D-ribose 1-diphosphate + ATP. It participates in amino-acid biosynthesis; L-histidine biosynthesis; L-histidine from 5-phospho-alpha-D-ribose 1-diphosphate: step 1/9. In terms of biological role, catalyzes the condensation of ATP and 5-phosphoribose 1-diphosphate to form N'-(5'-phosphoribosyl)-ATP (PR-ATP). Has a crucial role in the pathway because the rate of histidine biosynthesis seems to be controlled primarily by regulation of HisG enzymatic activity. The sequence is that of ATP phosphoribosyltransferase from Lachnoclostridium phytofermentans (strain ATCC 700394 / DSM 18823 / ISDg) (Clostridium phytofermentans).